A 366-amino-acid chain; its full sequence is Spermidine/putrescine import ATP-binding protein PotA (366 aa).

Residues 8 to 239 (IRFENVTKQF…PINKFVADFI (232 aa)) enclose the ABC transporter domain. An ATP-binding site is contributed by 41–48 (GPSGCGKT).

Belongs to the ABC transporter superfamily. Spermidine/putrescine importer (TC 3.A.1.11.1) family. As to quaternary structure, the complex is composed of two ATP-binding proteins (PotA), two transmembrane proteins (PotB and PotC) and a solute-binding protein (PotD).

It localises to the cell membrane. The enzyme catalyses ATP + H2O + polyamine-[polyamine-binding protein]Side 1 = ADP + phosphate + polyamineSide 2 + [polyamine-binding protein]Side 1.. Part of the ABC transporter complex PotABCD involved in spermidine/putrescine import. Responsible for energy coupling to the transport system. This Listeria innocua serovar 6a (strain ATCC BAA-680 / CLIP 11262) protein is Spermidine/putrescine import ATP-binding protein PotA.